The sequence spans 147 residues: Prefoldin subunit alpha 2 (147 aa).

It belongs to the prefoldin subunit alpha family. In terms of assembly, heterohexamer of two alpha and four beta subunits.

The protein resides in the cytoplasm. Molecular chaperone capable of stabilizing a range of proteins. Seems to fulfill an ATP-independent, HSP70-like function in archaeal de novo protein folding. This chain is Prefoldin subunit alpha 2 (pfdA2), found in Methanocaldococcus jannaschii (strain ATCC 43067 / DSM 2661 / JAL-1 / JCM 10045 / NBRC 100440) (Methanococcus jannaschii).